The sequence spans 323 residues: Ubiquinone biosynthesis protein COQ4, mitochondrial (323 aa).

Histidine 205, aspartate 206, histidine 209, and glutamate 221 together coordinate Zn(2+).

This sequence belongs to the COQ4 family. In terms of assembly, component of a multi-subunit COQ enzyme complex, composed of at least COQ3, COQ4, COQ5, COQ6, COQ7 and COQ9. Requires Zn(2+) as cofactor.

The protein resides in the mitochondrion inner membrane. The catalysed reaction is a 4-hydroxy-3-methoxy-5-(all-trans-polyprenyl)benzoate + H(+) = a 2-methoxy-6-(all-trans-polyprenyl)phenol + CO2. The protein operates within cofactor biosynthesis; ubiquinone biosynthesis. Functionally, lyase that catalyzes the C1-decarboxylation of 4-hydroxy-3-methoxy-5-(all-trans-polyprenyl)benzoic acid into 2-methoxy-6-(all-trans-polyprenyl)phenol during ubiquinone biosynthesis. The polypeptide is Ubiquinone biosynthesis protein COQ4, mitochondrial (Candida albicans (strain SC5314 / ATCC MYA-2876) (Yeast)).